A 90-amino-acid polypeptide reads, in one-letter code: Putative protein p49 (90 aa).

The chain is Putative protein p49 (49) from Escherichia coli (Bacteriophage APSE-1).